A 619-amino-acid polypeptide reads, in one-letter code: ESX-2 secretion system protein EccA2 (619 aa).

373–380 (GPPGTGKT) provides a ligand contact to ATP.

Belongs to the CbxX/CfxQ family. Part of the ESX-2 / type VII secretion system (T7SS), which is composed of cytosolic and membrane components.

Its subcellular location is the cytoplasm. Functionally, part of an ESX-2 / type VII specialized secretion system (T7SS), which exports several proteins. May have ATPase activity and might provide energy for the export of ESX-2 substrates. The polypeptide is ESX-2 secretion system protein EccA2 (Mycobacterium bovis (strain ATCC BAA-935 / AF2122/97)).